A 373-amino-acid chain; its full sequence is tRNA-specific 2-thiouridylase MnmA (373 aa).

ATP-binding positions include 12 to 19 (GMSGGVDS) and Met-38. Residues 98–100 (NPD) are interaction with target base in tRNA. Cys-103 serves as the catalytic Nucleophile. An intrachain disulfide couples Cys-103 to Cys-200. Residue Gly-127 coordinates ATP. The segment at 150–152 (KDQ) is interaction with tRNA. The active-site Cysteine persulfide intermediate is the Cys-200. An interaction with tRNA region spans residues 312–313 (RY).

The protein belongs to the MnmA/TRMU family.

It localises to the cytoplasm. The catalysed reaction is S-sulfanyl-L-cysteinyl-[protein] + uridine(34) in tRNA + AH2 + ATP = 2-thiouridine(34) in tRNA + L-cysteinyl-[protein] + A + AMP + diphosphate + H(+). Functionally, catalyzes the 2-thiolation of uridine at the wobble position (U34) of tRNA, leading to the formation of s(2)U34. This is tRNA-specific 2-thiouridylase MnmA from Streptococcus thermophilus (strain ATCC BAA-491 / LMD-9).